Here is a 126-residue protein sequence, read N- to C-terminus: Protein ApaG (126 aa).

The region spanning 2–126 (KQLESSIRIE…FRLAAPGLLH (125 aa)) is the ApaG domain.

The protein is Protein ApaG of Shewanella loihica (strain ATCC BAA-1088 / PV-4).